The chain runs to 98 residues: MPRSLKKGPFIEFKLEKRILDMNSKGERKVVKTWSRSSMISPDFVGHTVAVHNGKTHVPVYVTENMVGHKLGEFAPTRLYRGHAGGKAEKGGSAPRKK.

The protein belongs to the universal ribosomal protein uS19 family.

Protein S19 forms a complex with S13 that binds strongly to the 16S ribosomal RNA. In Chlorobaculum parvum (strain DSM 263 / NCIMB 8327) (Chlorobium vibrioforme subsp. thiosulfatophilum), this protein is Small ribosomal subunit protein uS19.